The chain runs to 735 residues: DNA replication licensing factor mcm5-A (735 aa).

The MCM domain occupies 332–538 (IYETVAKSIA…RDMTLAKHVM (207 aa)). R372 lines the ADP pocket. Positions 513 to 516 (SRFD) match the Arginine finger motif.

The protein belongs to the MCM family. In terms of assembly, component of the mcm2-7 complex (RLF-M). The complex forms a toroidal hexameric ring with the proposed subunit order mcm2-mcm6-mcm4-mcm7-mcm3-mcm5. The heterodimer of mmcm3/mcm5 interacts with mcm4, mmcm6, mcm7 and weakly with mcm2. Component of the CMG helicase complex, composed of the mcm2-7 complex, the GINS complex and cdc45.

It is found in the nucleus. The protein resides in the chromosome. The enzyme catalyses ATP + H2O = ADP + phosphate + H(+). In terms of biological role, acts as a component of the MCM2-7 complex (MCM complex) which is the replicative helicase essential for 'once per cell cycle' DNA replication initiation and elongation in eukaryotic cells. Core component of CDC45-MCM-GINS (CMG) helicase, the molecular machine that unwinds template DNA during replication, and around which the replisome is built. The active ATPase sites in the MCM2-7 ring are formed through the interaction surfaces of two neighboring subunits such that a critical structure of a conserved arginine finger motif is provided in trans relative to the ATP-binding site of the Walker A box of the adjacent subunit. The six ATPase active sites, however, are likely to contribute differentially to the complex helicase activity. The sequence is that of DNA replication licensing factor mcm5-A (mcm5-a) from Xenopus laevis (African clawed frog).